Consider the following 250-residue polypeptide: 2,3-bisphosphoglycerate-dependent phosphoglycerate mutase (250 aa).

Residues 8–15, 21–22, Arg60, 87–90, Lys98, 114–115, and 183–184 contribute to the substrate site; these read RHGESQWN, TG, ERHY, RR, and GN. His9 acts as the Tele-phosphohistidine intermediate in catalysis. Catalysis depends on Glu87, which acts as the Proton donor/acceptor.

The protein belongs to the phosphoglycerate mutase family. BPG-dependent PGAM subfamily. As to quaternary structure, homodimer.

The catalysed reaction is (2R)-2-phosphoglycerate = (2R)-3-phosphoglycerate. It functions in the pathway carbohydrate degradation; glycolysis; pyruvate from D-glyceraldehyde 3-phosphate: step 3/5. Catalyzes the interconversion of 2-phosphoglycerate and 3-phosphoglycerate. The protein is 2,3-bisphosphoglycerate-dependent phosphoglycerate mutase of Bordetella avium (strain 197N).